Consider the following 37-residue polypeptide: Large ribosomal subunit protein bL36B (37 aa).

It belongs to the bacterial ribosomal protein bL36 family.

This is Large ribosomal subunit protein bL36B from Aeromonas salmonicida (strain A449).